A 396-amino-acid chain; its full sequence is NADH-quinone oxidoreductase subunit D (396 aa).

It belongs to the complex I 49 kDa subunit family. NDH-1 is composed of 14 different subunits. Subunits NuoB, C, D, E, F, and G constitute the peripheral sector of the complex.

It localises to the cell inner membrane. The catalysed reaction is a quinone + NADH + 5 H(+)(in) = a quinol + NAD(+) + 4 H(+)(out). Its function is as follows. NDH-1 shuttles electrons from NADH, via FMN and iron-sulfur (Fe-S) centers, to quinones in the respiratory chain. The immediate electron acceptor for the enzyme in this species is believed to be ubiquinone. Couples the redox reaction to proton translocation (for every two electrons transferred, four hydrogen ions are translocated across the cytoplasmic membrane), and thus conserves the redox energy in a proton gradient. This Methylorubrum populi (strain ATCC BAA-705 / NCIMB 13946 / BJ001) (Methylobacterium populi) protein is NADH-quinone oxidoreductase subunit D.